Here is an 821-residue protein sequence, read N- to C-terminus: KN motif and ankyrin repeat domain-containing protein 3 (821 aa).

Over residues 1 to 10 (MAKFALNQNL) the composition is skewed to polar residues. Disordered regions lie at residues 1-36 (MAKF…PYSV), 58-184 (GPAA…AQLQ), 224-333 (LLAG…APET), and 385-547 (AAEE…GRCE). The segment covering 77–88 (RPGLAGARSPGA) has biased composition (low complexity). Basic and acidic residues predominate over residues 128–150 (PRVEHTLRETSRRLELAQTHERA). The segment covering 151–181 (PSPGRGVPRSPRGSGRSSPAPNLAPASPGPA) has biased composition (low complexity). Residues serine 152, serine 160, serine 164, serine 167, serine 168, and serine 177 each carry the phosphoserine modification. Residues 181-230 (AQLQLVREQMAAALRRLRELEDQARTLPELQEQVRALRAEKARLLAGRAQ) adopt a coiled-coil conformation. Positions 237–261 (AETRPDKLAQLRRLTERLATSERGG) are enriched in basic and acidic residues. Phosphoserine is present on residues serine 271, serine 280, and serine 293. A coiled-coil region spans residues 367–404 (GVSELLRGRLRELEEAREAAEEAAAGARAQLREATTQT). Low complexity-rich tracts occupy residues 388-400 (EAAA…LREA) and 494-507 (NGGA…SGSG). ANK repeat units lie at residues 622-652 (NGNT…EVNR), 656-690 (AGYS…DVNA), 695-724 (TGQT…DVNA), 728-758 (DGAT…DPAI), and 762-785 (EGTS…LHAH). Residues 784–821 (AHLSSGQPDTQSESPPGSQTATPGEGECGDNGENPQVQ) form a disordered region. The segment covering 787–805 (SSGQPDTQSESPPGSQTAT) has biased composition (polar residues).

As to expression, strongly expressed in breast, liver, lung, skeletal muscle and kidney.

Its function is as follows. May be involved in the control of cytoskeleton formation by regulating actin polymerization. This Homo sapiens (Human) protein is KN motif and ankyrin repeat domain-containing protein 3.